A 606-amino-acid chain; its full sequence is Lysosomal cobalamin transporter ABCD4 (606 aa).

The region spanning 39–332 is the ABC transmembrane type-1 domain; that stretch reads NALMFLTLLC…CFTQLIDLST (294 aa). The next 5 helical transmembrane spans lie at 43–63, 76–96, 190–210, 279–299, and 314–334; these read FLTL…VGLI, LEGF…NSTL, IFGY…PIVM, YLGS…GVYG, and AFVC…STTL. In terms of domain architecture, ABC transporter spans 389-603; sequence LERVSISAPS…GGGRWELMRI (215 aa). 421-428 is a binding site for ATP; sequence GNTGTGKT.

The protein belongs to the ABC transporter superfamily. ABCD family. Peroxisomal fatty acyl CoA transporter (TC 3.A.1.203) subfamily. As to quaternary structure, homodimer or heterodimer. Interacts with LMBRD1; this interaction induces the translocation of ABCD4 from the ER to the lysosome membrane. Interacts with LMBRD1 and MMACHC; this interaction ensures the transport of cobalamin from the lysosome to the cytosol. Ubiquitous.

Its subcellular location is the endoplasmic reticulum membrane. The protein localises to the lysosome membrane. It catalyses the reaction an R-cob(III)alamin(out) + ATP + H2O = an R-cob(III)alamin(in) + ADP + phosphate + H(+). Functionally, lysosomal membrane protein that transports cobalamin (Vitamin B12) from the lysosomal lumen to the cytosol in an ATP-dependent manner. Targeted by LMBRD1 lysosomal chaperone from the endoplasmic reticulum to the lysosomal membrane. Then forms a complex with lysosomal chaperone LMBRD1 and cytosolic MMACHC to transport cobalamin across the lysosomal membrane. The protein is Lysosomal cobalamin transporter ABCD4 of Homo sapiens (Human).